The chain runs to 379 residues: Cytochrome b (379 aa).

4 helical membrane passes run 33 to 53 (FGSL…FLAM), 77 to 98 (WLIR…FIHV), 113 to 133 (WNIG…GYVL), and 178 to 198 (FFAF…VHLL). Residues H83 and H97 each coordinate heme b. Heme b is bound by residues H182 and H196. Residue H201 participates in a ubiquinone binding. Helical transmembrane passes span 226–246 (TKDL…ALFF), 288–308 (LGGV…PLLN), 320–340 (VTQV…WIGG), and 347–367 (FTMI…ILMP).

It belongs to the cytochrome b family. The cytochrome bc1 complex contains 11 subunits: 3 respiratory subunits (MT-CYB, CYC1 and UQCRFS1), 2 core proteins (UQCRC1 and UQCRC2) and 6 low-molecular weight proteins (UQCRH/QCR6, UQCRB/QCR7, UQCRQ/QCR8, UQCR10/QCR9, UQCR11/QCR10 and a cleavage product of UQCRFS1). This cytochrome bc1 complex then forms a dimer. Heme b is required as a cofactor.

The protein localises to the mitochondrion inner membrane. Component of the ubiquinol-cytochrome c reductase complex (complex III or cytochrome b-c1 complex) that is part of the mitochondrial respiratory chain. The b-c1 complex mediates electron transfer from ubiquinol to cytochrome c. Contributes to the generation of a proton gradient across the mitochondrial membrane that is then used for ATP synthesis. This chain is Cytochrome b (MT-CYB), found in Akodon fumeus (Smoky grass mouse).